A 188-amino-acid chain; its full sequence is MPHSSSGAPLDPVAFIHSQIRTVPDWPQPGVMFRDITTLLQSPKALRILVDLFVERYVDAKLDYVAGLDARGFIIAPIVAYELSVGFVPIRKVGKLPYKTCSESYDLEYGSATVEIHEDACRPGDRVIIMDDLIATGGTMMAGRNLLQRLGAVVVEGAAIIDLPDLGGSTLLRNAGLPIYTVTEFAGH.

This sequence belongs to the purine/pyrimidine phosphoribosyltransferase family. In terms of assembly, homodimer.

Its subcellular location is the cytoplasm. The enzyme catalyses AMP + diphosphate = 5-phospho-alpha-D-ribose 1-diphosphate + adenine. It participates in purine metabolism; AMP biosynthesis via salvage pathway; AMP from adenine: step 1/1. Its function is as follows. Catalyzes a salvage reaction resulting in the formation of AMP, that is energically less costly than de novo synthesis. The polypeptide is Adenine phosphoribosyltransferase (Burkholderia vietnamiensis (strain G4 / LMG 22486) (Burkholderia cepacia (strain R1808))).